We begin with the raw amino-acid sequence, 209 residues long: Probable GTP-binding protein EngB (209 aa).

In terms of domain architecture, EngB-type G spans 22 to 198; the sequence is TPLEIAFVGR…NRTVGSWFDA (177 aa). 2 residues coordinate Mg(2+): S37 and T59.

Belongs to the TRAFAC class TrmE-Era-EngA-EngB-Septin-like GTPase superfamily. EngB GTPase family. Requires Mg(2+) as cofactor.

In terms of biological role, necessary for normal cell division and for the maintenance of normal septation. The sequence is that of Probable GTP-binding protein EngB from Neisseria gonorrhoeae (strain ATCC 700825 / FA 1090).